Reading from the N-terminus, the 359-residue chain is Peptide chain release factor 1 (359 aa).

Position 236 is an N5-methylglutamine (Q236).

Belongs to the prokaryotic/mitochondrial release factor family. Post-translationally, methylated by PrmC. Methylation increases the termination efficiency of RF1.

The protein localises to the cytoplasm. Peptide chain release factor 1 directs the termination of translation in response to the peptide chain termination codons UAG and UAA. The chain is Peptide chain release factor 1 from Streptococcus pneumoniae serotype 4 (strain ATCC BAA-334 / TIGR4).